Reading from the N-terminus, the 258-residue chain is MQVLVVSPPLIAAASLSKPLNSLSKAALSFSRAKPICPFPQTSRRPISVYKSPMNNLFNRLGFGSRPQAQADPSSAAIAQGPDDDVPSSGQQFAQFGAGCFWGVELAYQRVPGVTKTEVGYSHGIVHNPSYEDVCTGTTGHNEVVRVQYDPKECSFESLLDVFWNRHDPTTLNRQGGDVGTQYRSGIYYYTDEQERIAREAVEKQQKILNKRIVTEILPATKFYRAENYHQQYLAKGGRMGLRQSAEKGCKDPIRCYG.

Residues 1-53 constitute a chloroplast transit peptide; it reads MQVLVVSPPLIAAASLSKPLNSLSKAALSFSRAKPICPFPQTSRRPISVYKSP. The residue at position 54 (Met-54) is an N-acetylmethionine. The interval 62-89 is disordered; sequence GFGSRPQAQADPSSAAIAQGPDDDVPSS. Ser-245 is modified (phosphoserine).

The protein belongs to the MsrA Met sulfoxide reductase family. Expressed in rosette and cauline leaves, and at lower levels in stems and flowers (at protein level).

The protein localises to the plastid. It is found in the chloroplast stroma. It carries out the reaction L-methionyl-[protein] + [thioredoxin]-disulfide + H2O = L-methionyl-(S)-S-oxide-[protein] + [thioredoxin]-dithiol. The enzyme catalyses [thioredoxin]-disulfide + L-methionine + H2O = L-methionine (S)-S-oxide + [thioredoxin]-dithiol. Catalyzes the reduction of methionine sulfoxide (MetSO) to methionine in proteins. Plays a protective role against oxidative stress by restoring activity to proteins that have been inactivated by methionine oxidation. Prevents the methionine sulfoxidation of the heat shock protein HSP21 and its subsequent inactivation. MSRA family specifically reduces the MetSO S-enantiomer. The chain is Peptide methionine sulfoxide reductase A4, chloroplastic (MSR4) from Arabidopsis thaliana (Mouse-ear cress).